Reading from the N-terminus, the 355-residue chain is DNA polymerase IV (355 aa).

Positions 7-188 (IIHIDMDCFY…LPVRKLFGVG (182 aa)) constitute a UmuC domain. The Mg(2+) site is built by aspartate 11 and aspartate 106. The active site involves glutamate 107.

The protein belongs to the DNA polymerase type-Y family. Monomer. Mg(2+) is required as a cofactor.

Its subcellular location is the cytoplasm. The catalysed reaction is DNA(n) + a 2'-deoxyribonucleoside 5'-triphosphate = DNA(n+1) + diphosphate. Functionally, poorly processive, error-prone DNA polymerase involved in untargeted mutagenesis. Copies undamaged DNA at stalled replication forks, which arise in vivo from mismatched or misaligned primer ends. These misaligned primers can be extended by PolIV. Exhibits no 3'-5' exonuclease (proofreading) activity. May be involved in translesional synthesis, in conjunction with the beta clamp from PolIII. The sequence is that of DNA polymerase IV from Legionella pneumophila subsp. pneumophila (strain Philadelphia 1 / ATCC 33152 / DSM 7513).